A 99-amino-acid chain; its full sequence is Malonate decarboxylase acyl carrier protein (99 aa).

Serine 25 carries the O-(phosphoribosyl dephospho-coenzyme A)serine modification.

Belongs to the MdcC family. Covalently binds the prosthetic group of malonate decarboxylase.

It localises to the cytoplasm. In terms of biological role, subunit of malonate decarboxylase, it is an acyl carrier protein to which acetyl and malonyl thioester residues are bound via a 2'-(5''-phosphoribosyl)-3'-dephospho-CoA prosthetic group and turn over during the catalytic mechanism. This chain is Malonate decarboxylase acyl carrier protein, found in Pseudomonas fluorescens (strain SBW25).